An 800-amino-acid polypeptide reads, in one-letter code: Phenylalanine--tRNA ligase beta subunit (800 aa).

The tRNA-binding domain maps to 39-154 (TKDIKNLVVG…EAQVPGTDAL (116 aa)). The region spanning 408-483 (AFITPIDITA…RIYGYDDIPS (76 aa)) is the B5 domain. Residues aspartate 461, aspartate 467, glutamate 470, and glutamate 471 each coordinate Mg(2+). Positions 708–800 (PRFPGMSRDI…ALIEQGAVIR (93 aa)) constitute an FDX-ACB domain.

It belongs to the phenylalanyl-tRNA synthetase beta subunit family. Type 1 subfamily. In terms of assembly, tetramer of two alpha and two beta subunits. Mg(2+) serves as cofactor.

The protein resides in the cytoplasm. The enzyme catalyses tRNA(Phe) + L-phenylalanine + ATP = L-phenylalanyl-tRNA(Phe) + AMP + diphosphate + H(+). This chain is Phenylalanine--tRNA ligase beta subunit, found in Staphylococcus aureus (strain COL).